A 450-amino-acid polypeptide reads, in one-letter code: tRNA modification GTPase MnmE (450 aa).

R23, E80, and R123 together coordinate (6S)-5-formyl-5,6,7,8-tetrahydrofolate. The 154-residue stretch at 219–372 (GLHVVLAGQP…LRARLLQMAG (154 aa)) folds into the TrmE-type G domain. N229 provides a ligand contact to K(+). Residues 229-234 (NVGKSS), 248-254 (TPIAGTT), and 273-276 (DTAG) contribute to the GTP site. S233 is a Mg(2+) binding site. T248, I250, and T253 together coordinate K(+). T254 provides a ligand contact to Mg(2+). K450 is a binding site for (6S)-5-formyl-5,6,7,8-tetrahydrofolate.

This sequence belongs to the TRAFAC class TrmE-Era-EngA-EngB-Septin-like GTPase superfamily. TrmE GTPase family. In terms of assembly, homodimer. Heterotetramer of two MnmE and two MnmG subunits. It depends on K(+) as a cofactor.

Its subcellular location is the cytoplasm. Exhibits a very high intrinsic GTPase hydrolysis rate. Involved in the addition of a carboxymethylaminomethyl (cmnm) group at the wobble position (U34) of certain tRNAs, forming tRNA-cmnm(5)s(2)U34. This Bordetella avium (strain 197N) protein is tRNA modification GTPase MnmE.